The sequence spans 333 residues: Nuclear egress protein 1 (333 aa).

The segment at 45–64 (SRRYKSVSRSGPSMRVRSRT) is disordered. The CCCH-type zinc-finger motif lies at 128–251 (CLSLSGMGYH…YVIFPGKSVH (124 aa)).

This sequence belongs to the herpesviridae NEC1 protein family. As to quaternary structure, forms a heterohexameric complex with NEC2. Interacts with capsid vertex specific component 2/CVC2; this interaction directs the capsid to the host inner nuclear membrane to initiate budding. Phosphorylated at serine residues in the N-terminus. This phosphorylation regulates the localization within the inner nuclear membrane.

It localises to the host nucleus inner membrane. Functionally, plays an essential role in virion nuclear egress, the first step of virion release from infected cell. Within the host nucleus, NEC1 interacts with the newly formed capsid through the vertexes and directs it to the inner nuclear membrane by associating with NEC2. Induces the budding of the capsid at the inner nuclear membrane as well as its envelopment into the perinuclear space. There, the NEC1/NEC2 complex promotes the fusion of the enveloped capsid with the outer nuclear membrane and the subsequent release of the viral capsid into the cytoplasm where it will reach the secondary budding sites in the host Golgi or trans-Golgi network. This chain is Nuclear egress protein 1, found in Varicella-zoster virus (strain Dumas) (HHV-3).